Consider the following 949-residue polypeptide: Bifunctional uridylyltransferase/uridylyl-removing enzyme (949 aa).

The interval 1–377 is uridylyltransferase; sequence MARHETSFPE…RFRNRVRKIA (377 aa). Residues 378-733 form a uridylyl-removing region; sequence GTLDFVDDGG…VRTHDFHAIT (356 aa). One can recognise an HD domain in the interval 494–610; it reads VDEHLLRSVD…VDFAERVQSL (117 aa). ACT domains are found at residues 734–816 and 845–926; these read EITV…VIAS and VIEV…ERMP. The disordered stretch occupies residues 926–949; the sequence is PSGIIAPTPVSRVPHGSKTTKAET.

Belongs to the GlnD family. Mg(2+) serves as cofactor.

It catalyses the reaction [protein-PII]-L-tyrosine + UTP = [protein-PII]-uridylyl-L-tyrosine + diphosphate. The catalysed reaction is [protein-PII]-uridylyl-L-tyrosine + H2O = [protein-PII]-L-tyrosine + UMP + H(+). Its activity is regulated as follows. Uridylyltransferase (UTase) activity is inhibited by glutamine, while glutamine activates uridylyl-removing (UR) activity. Its function is as follows. Modifies, by uridylylation and deuridylylation, the PII regulatory proteins (GlnB and homologs), in response to the nitrogen status of the cell that GlnD senses through the glutamine level. Under low glutamine levels, catalyzes the conversion of the PII proteins and UTP to PII-UMP and PPi, while under higher glutamine levels, GlnD hydrolyzes PII-UMP to PII and UMP (deuridylylation). Thus, controls uridylylation state and activity of the PII proteins, and plays an important role in the regulation of nitrogen fixation and metabolism. This is Bifunctional uridylyltransferase/uridylyl-removing enzyme from Rhizobium meliloti (strain 1021) (Ensifer meliloti).